Consider the following 153-residue polypeptide: Arginine repressor (153 aa).

It belongs to the ArgR family.

The protein localises to the cytoplasm. It functions in the pathway amino-acid biosynthesis; L-arginine biosynthesis [regulation]. Functionally, regulates arginine biosynthesis genes. In Acetivibrio thermocellus (strain ATCC 27405 / DSM 1237 / JCM 9322 / NBRC 103400 / NCIMB 10682 / NRRL B-4536 / VPI 7372) (Clostridium thermocellum), this protein is Arginine repressor.